Here is a 348-residue protein sequence, read N- to C-terminus: Ileal sodium/bile acid cotransporter (348 aa).

Residues M1–N28 lie on the Extracellular side of the membrane. N-linked (GlcNAc...) asparagine glycosylation occurs at N10. Residues I29–M49 traverse the membrane as a helical segment. At G50 to T82 the chain is on the cytoplasmic side. The chain crosses the membrane as a helical span at residues G83–I103. Residues G104–S126 lie on the Extracellular side of the membrane. A helical transmembrane segment spans residues V127–I147. The Cytoplasmic portion of the chain corresponds to Y148–S157. Residues I158–I178 form a helical membrane-spanning segment. Over G179–K195 the chain is Extracellular. A helical membrane pass occupies residues I196–Y216. The Cytoplasmic segment spans residues Q217 to P224. Residues K225–A245 form a helical membrane-spanning segment. At R246–N284 the chain is on the extracellular side. A helical transmembrane segment spans residues V285–L305. Residues G306 to K348 lie on the Cytoplasmic side of the membrane. Residues A320–G329 are compositionally biased toward basic and acidic residues. The segment at A320 to K348 is disordered. Position 335 is a phosphoserine (S335).

It belongs to the bile acid:sodium symporter (BASS) (TC 2.A.28) family. Monomer and homodimer. Mainly expressed in ileum and kidney, lower expression in cecum.

Its subcellular location is the membrane. It carries out the reaction taurocholate(out) + 2 Na(+)(out) = taurocholate(in) + 2 Na(+)(in). It catalyses the reaction cholate(out) + 2 Na(+)(out) = cholate(in) + 2 Na(+)(in). The enzyme catalyses taurochenodeoxycholate(out) + 2 Na(+)(out) = taurochenodeoxycholate(in) + 2 Na(+)(in). The catalysed reaction is tauroursodeoxycholate(out) + 2 Na(+)(out) = tauroursodeoxycholate(in) + 2 Na(+)(in). It carries out the reaction glycocholate(out) + 2 Na(+)(out) = glycocholate(in) + 2 Na(+)(in). It catalyses the reaction tauronorcholate(out) + 2 Na(+)(out) = tauronorcholate(in) + 2 Na(+)(in). The enzyme catalyses tauroallocholate(out) + 2 Na(+)(out) = tauroallocholate(in) + 2 Na(+)(in). The catalysed reaction is taurodeoxycholate(out) + 2 Na(+)(out) = taurodeoxycholate(in) + 2 Na(+)(in). It carries out the reaction tauro-beta-muricholate(out) + 2 Na(+)(out) = tauro-beta-muricholate(in) + 2 Na(+)(in). Plays a critical role in the sodium-dependent reabsorption of bile acids from the lumen of the small intestine. Transports various bile acids, unconjugated or conjugated, such as cholate and taurocholate. Also responsible for bile acid transport in the renal proximal tubules, a salvage mechanism that helps conserve bile acids. Works collaboratively with the Na(+)-taurocholate cotransporting polypeptide (NTCP), the organic solute transporter (OST), and the bile salt export pump (BSEP), to ensure efficacious biological recycling of bile acids during enterohepatic circulation. The protein is Ileal sodium/bile acid cotransporter (SLC10A2) of Homo sapiens (Human).